We begin with the raw amino-acid sequence, 525 residues long: GMP synthase [glutamine-hydrolyzing] (525 aa).

The region spanning 9–207 is the Glutamine amidotransferase type-1 domain; the sequence is RILILDFGSQ…ILDICGCEAL (199 aa). Residue C86 is the Nucleophile of the active site. Active-site residues include H181 and E183. Residues 208 to 400 form the GMPS ATP-PPase domain; sequence WTPSKIAEDA…LGLPYDMVYR (193 aa). 235 to 241 contacts ATP; that stretch reads SGGVDSS.

As to quaternary structure, homodimer.

The catalysed reaction is XMP + L-glutamine + ATP + H2O = GMP + L-glutamate + AMP + diphosphate + 2 H(+). It functions in the pathway purine metabolism; GMP biosynthesis; GMP from XMP (L-Gln route): step 1/1. In terms of biological role, catalyzes the synthesis of GMP from XMP. In Pseudomonas syringae pv. syringae (strain B728a), this protein is GMP synthase [glutamine-hydrolyzing].